The following is a 784-amino-acid chain: Cadherin-5 (784 aa).

The N-terminal stretch at 1–24 (MQRLTELATALGAFLGLLAVAAMA) is a signal peptide. The propeptide occupies 25 to 45 (GPNFPQIDTPNMLPAHHRQKR). Cadherin domains follow at residues 46–149 (DWIW…WPVF), 150–256 (SHQV…FPVF), 257–371 (TQST…PPVF), 372–476 (QRHF…DNPP), and 477–593 (EFAQ…MAAQ). The Extracellular segment spans residues 46–599 (DWIWNQMHID…MAAQAGVSIQ (554 aa)). Residues E56 and E57 each coordinate Ca(2+). N59 carries N-linked (GlcNAc...) asparagine glycosylation. 7 residues coordinate Ca(2+): D107, E109, D141, I142, N143, D144, and N145. The N-linked (GlcNAc...) asparagine glycan is linked to N155. Residues D175, D177, H184, and D229 each contribute to the Ca(2+) site. N441, N523, and N535 each carry an N-linked (GlcNAc...) asparagine glycan. The helical transmembrane segment at 600 to 620 (ALVAIFLCILTITVITLLIIL) threads the bilayer. Positions 621 to 660 (RRRIRKQAHAHSKSALEIHEQLVTYDEEGGGEMDTTSYDV) are required for interaction with PALS1. Residues 621–784 (RRRIRKQAHA…GSDPQEELII (164 aa)) are Cytoplasmic-facing.

As to quaternary structure, part of a complex composed of AMOTL2, MAGI1 and CDH5, within the complex AMOTL2 acts as a scaffold protein for the interaction of MAGI1 with CDH5. The complex is required for coupling actin fibers to cell junctions in endothelial cells. Within the complex AMOTL2 (via its N-terminus) interacts with CDH5. Interacts (via cadherin 5 domain) with PTPRB. Interacts with TRPC4. Interacts with KRIT1. Interacts with PARD3. Interacts with RTN4 (isoform B). Interacts with PALS1; the interaction promotes PALS1 localization to cell junctions and is required for CDH5-mediated vascular lumen formation and endothelial cell polarity. Interacts with CTNND1/p120-catenin; the interaction controls CADH5 endocytosis. In terms of processing, phosphorylated on tyrosine residues by KDR/VEGFR-2. Dephosphorylated by PTPRB. Post-translationally, O-glycosylated. Expressed in postnatal endothelial cells of the retinal vascular plexus (at protein level).

The protein resides in the cell junction. It localises to the adherens junction. Its subcellular location is the cell membrane. The protein localises to the cytoplasm. Cadherins are calcium-dependent cell adhesion proteins. They preferentially interact with themselves in a homophilic manner in connecting cells; cadherins may thus contribute to the sorting of heterogeneous cell types. This cadherin may play an important role in endothelial cell biology through control of the cohesion and organization of the intercellular junctions. It associates with alpha-catenin forming a link to the cytoskeleton. Plays a role in coupling actin fibers to cell junctions in endothelial cells, via acting as a cell junctional complex anchor for AMOTL2 and MAGI1. Acts in concert with KRIT1 and PALS1 to establish and maintain correct endothelial cell polarity and vascular lumen. These effects are mediated by recruitment and activation of the Par polarity complex and RAP1B. Required for activation of PRKCZ and for localization of phosphorylated PRKCZ, PARD3, TIAM1 and RAP1B to the cell junction. Associates with CTNND1/p120-catenin to control CADH5 endocytosis. The sequence is that of Cadherin-5 from Mus musculus (Mouse).